The primary structure comprises 216 residues: Corrinoid protein DSY3155 (216 aa).

Residues 1-90 (MIMSLLDELK…EIAKKGMSEG (90 aa)) form the B12-binding N-terminal domain. In terms of domain architecture, B12-binding spans 93 to 216 (KGKIVLGTVE…VELANKILGK (124 aa)). His106 is a methylcob(III)alamin binding site.

The protein belongs to the methylamine corrinoid protein family.

Functionally, probably harbors a corrinoid prosthetic group and acts as a methyl group carrier between MtgB and MtgA. A methyl group from glycine betaine is likely first transferred to the corrinoid prosthetic group of the enzyme by MtgB, and then transferred to tetrahydrofolate (THF) by MtgA. The methyl group may then be ultimately converted to carbon dioxide, and its oxidation would also provide reducing equivalents for anaerobic respiration. Thus, may function in the pathway that allows anaerobic methylotrophic growth of D.hafniense using glycine betaine. The polypeptide is Corrinoid protein DSY3155 (Desulfitobacterium hafniense (strain Y51)).